The primary structure comprises 117 residues: Mediator of RNA polymerase II transcription subunit 11 (117 aa).

At Ala2 the chain carries N-acetylalanine.

The protein belongs to the Mediator complex subunit 11 family. Component of the Mediator complex, which is composed of MED1, MED4, MED6, MED7, MED8, MED9, MED10, MED11, MED12, MED13, MED13L, MED14, MED15, MED16, MED17, MED18, MED19, MED20, MED21, MED22, MED23, MED24, MED25, MED26, MED27, MED29, MED30, MED31, CCNC, CDK8 and CDC2L6/CDK11. The MED12, MED13, CCNC and CDK8 subunits form a distinct module termed the CDK8 module. Mediator containing the CDK8 module is less active than Mediator lacking this module in supporting transcriptional activation. Individual preparations of the Mediator complex lacking one or more distinct subunits have been variously termed ARC, CRSP, DRIP, PC2, SMCC and TRAP. As to expression, expressed in cochlea.

The protein resides in the nucleus. Its function is as follows. Component of the Mediator complex, a coactivator involved in the regulated transcription of nearly all RNA polymerase II-dependent genes. Mediator functions as a bridge to convey information from gene-specific regulatory proteins to the basal RNA polymerase II transcription machinery. Mediator is recruited to promoters by direct interactions with regulatory proteins and serves as a scaffold for the assembly of a functional pre-initiation complex with RNA polymerase II and the general transcription factors. This chain is Mediator of RNA polymerase II transcription subunit 11 (Med11), found in Mus musculus (Mouse).